A 1030-amino-acid polypeptide reads, in one-letter code: MSALRVTSPSVEYVQRPLGLDAAHPRLSWPMASAAPGRRQSAYQVRVASSAAGLSHPDVWDSGKVVSDDSVLVPYAGPPLKPRTRYFWSVRVWDADGGASEWSAPSWWETGLMGASQWSAKWISAPAPLTEAPSLEGSSWIWFPEGEPANSAPAATRWFRRTVDLPDDITGATLAISADNVYAVSVDGAEVARTDLEADNEGWRRPAVIDVLDHVHSGNNTLAVSASNASVGPAGWICVLVLTTASGEKKIFSDASWKSTDHEPADGWREPDFDDSGWPAAKVAAAWGAGPWGRVAPVASAANQLRHEFRLPHKKVSRARLYATALGLYEAHLNGRRVGRDQLAPGWTDYRKRVQYQTYDVTSSVRPGANALAAYVAPGWYAGNVGMFGPHQYGERPALLAQLEVEYADGTSERITSGPDWRAASGPIVSADLLSGETYDARKETAGWTSPGFDDRAWLAVRGADNDVPEQIVAQVDGPVRIAKELPARKVTEPKPGVFVLDLGQNMVGSVRLRVSGDAGTTVRLRHAEVLNPDGTIYTANLRSAAATDTYTLKGQGEETYEPRFTFHGFRYVEVTGFPGKPSTTSVTGRVMHTSAPFTFEFETNVPMLNKLHSNITWGQRGNFLSVPTDTPARDERLGWTGDINVFAPTAAYTMESARFLTKWLVDLRDAQTSDGAFTDVAPAVGNLGNGVAGWGDAGVTVPWALYQAYGDRQVLADALPSVHAWLRYLEKHSDGLLRPADGYGDWLNVSDETPKDVIATAYFAHSADLAARMATELGKDAAPYTDLFTRIRKAFQTAYVASDGKVKGDTQSAYVLTLSMNLVPDALRKAAADRLVALIEAKDWHLSTGFLGTPRLLPVLTDTGHTDVAYRLLHQRTFPSWGYPIDKGSTTMWERWDSIQPDGGFQTPEMNSFNHYAYGSVGEWMYANIAGIAPGRAGYRQVVIRPRPGGEVTSARATFASLHGPVSTRWQQRSGGFVLTCSVPPNTTAEVWIPADHPDRVQHTHGTFVRAEDGCAVFEVGSGSHRFTV.

A carbohydrate-binding module-67 (CBM67) region spans residues 133–297 (PSLEGSSWIW…GAGPWGRVAP (165 aa)). Positions 179 and 180 each coordinate Ca(2+). Residues 179 to 180 (DN) and Trp203 contribute to the alpha-L-rhamnose site. The Ca(2+) site is built by Asn228 and Pro233. Residues Asp630, 634–636 (RDE), Asp643, and Trp695 each bind alpha-L-rhamnose. The active-site Proton donor is Glu636. Glu895 (proton acceptor) is an active-site residue. An alpha-L-rhamnose-binding site is contributed by His916.

This sequence belongs to the glycosyl hydrolase 78 family.

It carries out the reaction Hydrolysis of terminal non-reducing alpha-L-rhamnose residues in alpha-L-rhamnosides.. Alpha-L-rhamnosidase which is able to degrade p-nitrophenyl-alpha-L-rhamnopyranoside (PNP-Rha) in vitro. Releases L-rhamnose from citrus flavonoids such as naringin, rutin and hesperidin, and the arabinogalactan-protein (AGP) gum arabic. AGPs are a family of proteoglycans that are localized on the cell surfaces of higher plants. Cleaves both the alpha-1,6 and the alpha-1,2-linked rhamnosyl residues. This is Alpha-L-rhamnosidase from Streptomyces avermitilis (strain ATCC 31267 / DSM 46492 / JCM 5070 / NBRC 14893 / NCIMB 12804 / NRRL 8165 / MA-4680).